A 675-amino-acid polypeptide reads, in one-letter code: Nexilin (675 aa).

Residues 1–66 (MNDISQKAEI…RKEQYIRERE (66 aa)) form a disordered region. Residue K16 is modified to Phosphoserine. A compositionally biased stretch (basic and acidic residues) spans 27 to 66 (GKGDVKDKFEAMQRAREERNQRRSRDEKQRRKEQYIRERE). S80 is subject to Phosphoserine. Positions 105 to 127 (RFAEMEKQRQEEQRKRTEEERKR) are disordered. A Phosphoserine modification is found at S241. 2 disordered regions span residues 254-278 (LERQ…EEEK) and 313-336 (SFEE…ARRR). Residues S357 and S365 each carry the phosphoserine modification. T370 bears the Phosphothreonine mark. 2 disordered regions span residues 487–513 (ENFH…KVNM) and 551–584 (LQKK…APWF). A phosphoserine mark is found at S564 and S569. One can recognise an Ig-like domain in the interval 582–670 (PWFKKPLKNT…GSAASTCILT (89 aa)).

In terms of assembly, interacts with F-actin. In terms of tissue distribution, abundantly expressed in heart and skeletal muscle, and at lower levels in placenta, lung, liver and pancreas. Also expressed in HeLaS3 and MOLT-4 cell lines.

It localises to the cytoplasm. It is found in the cytoskeleton. Its subcellular location is the cell junction. The protein resides in the adherens junction. The protein localises to the myofibril. It localises to the sarcomere. It is found in the z line. In terms of biological role, involved in regulating cell migration through association with the actin cytoskeleton. Has an essential role in the maintenance of Z line and sarcomere integrity. In Homo sapiens (Human), this protein is Nexilin.